Consider the following 98-residue polypeptide: MIFVITIKMNCLNHEVFYLLQEAASKAENDGKNLYIYPQGNNFSAGADLKLLLSYIEDKNFHDLENLLKLGQQTMLHLKYSSVHVISLWSWCGTWRWI.

This is an uncharacterized protein from Rickettsia conorii (strain ATCC VR-613 / Malish 7).